Consider the following 334-residue polypeptide: DNA-directed RNA polymerase subunit alpha (334 aa).

The interval 1–232 is alpha N-terminal domain (alpha-NTD); it reads MIREKLKVST…DLFIPFLHAE (232 aa). The interval 267–334 is alpha C-terminal domain (alpha-CTD); the sequence is QKEITLKSIF…NILQIENHFV (68 aa).

Belongs to the RNA polymerase alpha chain family. As to quaternary structure, in plastids the minimal PEP RNA polymerase catalytic core is composed of four subunits: alpha, beta, beta', and beta''. When a (nuclear-encoded) sigma factor is associated with the core the holoenzyme is formed, which can initiate transcription.

Its subcellular location is the plastid. It is found in the chloroplast. The catalysed reaction is RNA(n) + a ribonucleoside 5'-triphosphate = RNA(n+1) + diphosphate. Functionally, DNA-dependent RNA polymerase catalyzes the transcription of DNA into RNA using the four ribonucleoside triphosphates as substrates. The chain is DNA-directed RNA polymerase subunit alpha from Pisum sativum (Garden pea).